Reading from the N-terminus, the 184-residue chain is Ribosome-recycling factor (184 aa).

The protein belongs to the RRF family.

The protein localises to the cytoplasm. Functionally, responsible for the release of ribosomes from messenger RNA at the termination of protein biosynthesis. May increase the efficiency of translation by recycling ribosomes from one round of translation to another. This is Ribosome-recycling factor from Onion yellows phytoplasma (strain OY-M).